The sequence spans 1032 residues: Toll-like receptor 9 (1032 aa).

The N-terminal stretch at 1–25 (MGPCRGALHPLSLLVQAAALALALA) is a signal peptide. Residues 26 to 815 (QGTLPAFLPC…QDLRLCLDEA (790 aa)) are Extracellular-facing. Cysteines 35 and 45 form a disulfide. 47-51 (WLFLK) provides a ligand contact to DNA. LRR repeat units lie at residues 62-85 (RGNVTSLSLYSNRIHHLHDYDFVH), 87-110 (VHLRRLNLKWNCPPASLSPMHFPC), 122-147 (VPTLEDLNLSYNSITTVPALPSSLVS), 150-166 (LSRTNILVLDPATLAGL), 167-190 (YALRFLFLDGNCYYKNPCQQALQV), 198-221 (LGNLTHLSLKYNNLTVVPRGLPPS), 223-242 (EYLLLSYNHIITLAPEDLAN), 243-268 (LTALRVLDVGGNCRRCDHARNPCREC), 283-306 (LSHLEGLVLRDSSLYSLDPRWFHG), 308-332 (GNLMVLDLSENFLYDCITKTKAFYG), 333-356 (LARLRRLNLSFNYHKKVSFAHLHL), 363-386 (LLSLQELDIHGIFFRSLSKTTLQS), 390-413 (LPMLQRLHLQLNFISQAQLSIFGA), 415-440 (PGLRYVDLSDNRISGAAEPAAATGEV), 472-496 (CRTLNFTLDLSRNNLVTVQPEMFVR), 498-521 (ARLQCLGLSHNSISQAVNGSQFVP), 522-545 (LSNLRVLDLSHNKLDLYHGRSFTE), 547-574 (PRLEALDLSYNSQPFSMRGVGHNLSFVA), 576-600 (LPALRYLSLAHNGIHSRVSQQLRSA), 602-624 (LRALDFSGNTLSQMWAEGDLYLR), 629-652 (LRSLVQLDLSQNRLHTLLPRNLDN), 654-677 (PKSLRLLRLRDNYLAFFNWSSLAL), 678-701 (LPKLEALDLAGNQLKALSNGSLPN), 703-725 (TQLQRLDLSGNSIGFVVPSFFAL), 726-749 (AVRLRELNLSANALKTVEPSWFGS), and 751-774 (AGALKVLDVTANPLHCACGATFVD). N-linked (GlcNAc...) asparagine glycosylation is present at Asn-64. DNA contacts are provided by residues 72-77 (SNRIHH) and 95-109 (KWNCPPASLSPMHFP). A disulfide bridge links Cys-98 with Cys-110. A glycan (N-linked (GlcNAc...) asparagine) is linked at Asn-129. Residues Tyr-132, Arg-152, and 179 to 181 (YYK) each bind DNA. Residues Cys-178 and Cys-184 are joined by a disulfide bond. Asn-200 carries an N-linked (GlcNAc...) asparagine glycan. Position 208 (Tyr-208) interacts with DNA. Asn-210 and Asn-242 each carry an N-linked (GlcNAc...) asparagine glycan. Cystine bridges form between Cys-255–Cys-268 and Cys-258–Cys-265. Cys-258 is lipidated: S-palmitoyl cysteine. A DNA-binding site is contributed by Arg-262. Cys-265 carries the S-palmitoyl cysteine lipid modification. N-linked (GlcNAc...) asparagine glycosylation occurs at Asn-340. Cysteines 472 and 502 form a disulfide. N-linked (GlcNAc...) asparagine glycosylation is found at Asn-476 and Asn-515. The N-linked (GlcNAc...) asparagine glycan is linked to Asn-569. 3 N-linked (GlcNAc...) asparagine glycosylation sites follow: Asn-671, Asn-696, and Asn-701. N-linked (GlcNAc...) asparagine glycosylation occurs at Asn-733. 2 disulfides stabilise this stretch: Cys-766–Cys-792 and Cys-768–Cys-811. A helical membrane pass occupies residues 816–836 (LSWVCFSLSLLAVALSLAVPM). Topologically, residues 837–1032 (LHQLCGWDLW…QNFCRGPTTA (196 aa)) are cytoplasmic. A TIR domain is found at 868 to 1013 (LAYDAFVVFD…SFWAQLGTAL (146 aa)).

Belongs to the Toll-like receptor family. In terms of assembly, monomer and homodimer. Exists as a monomer in the absence of unmethylated cytidine-phosphate-guanosine (CpG) ligand. Proteolytic processing of an insertion loop (Z-loop) is required for homodimerization upon binding to the unmethylated CpG ligand leading to its activation. Interacts with MYD88 via their respective TIR domains. Interacts with BTK. Interacts (via transmembrane domain) with UNC93B1. Interacts with CD300LH; the interaction may promote full activation of TLR9-triggered innate responses. Interacts with CNPY3 and HSP90B1; this interaction is required for proper folding in the endoplasmic reticulum. Interacts with SMPDL3B. Interacts with CD82; this interaction is essential for TLR9-dependent myddosome formation in response to CpG stimulation. In terms of processing, activated by proteolytic cleavage of the flexible loop between repeats LRR14 and LRR15 within the ectodomain. Cleavage requires UNC93B1. Proteolytically processed by first removing the majority of the ectodomain by either asparagine endopeptidase (AEP) or a cathepsin followed by a trimming event that is solely cathepsin mediated and required for optimal receptor signaling. Post-translationally, palmitoylated by ZDHHC3 in the Golgi regulates TLR9 trafficking from the Golgi to endosomes. Depalmitoylation by PPT1 controls the release of TLR9 from UNC93B1 in endosomes.

It localises to the endoplasmic reticulum membrane. The protein resides in the endosome. Its subcellular location is the lysosome. The protein localises to the cytoplasmic vesicle. It is found in the phagosome. Its function is as follows. Key component of innate and adaptive immunity. TLRs (Toll-like receptors) control host immune response against pathogens through recognition of molecular patterns specific to microorganisms. TLR9 is a nucleotide-sensing TLR which is activated by unmethylated cytidine-phosphate-guanosine (CpG) dinucleotides. Acts via MYD88 and TRAF6, leading to NF-kappa-B activation, cytokine secretion and the inflammatory response. Upon CpG stimulation, induces B-cell proliferation, activation, survival and antibody production. This is Toll-like receptor 9 (TLR9) from Canis lupus familiaris (Dog).